A 530-amino-acid chain; its full sequence is UDP-glucuronosyltransferase 1A9 (530 aa).

Positions 1-25 (MACTGWTSPLPLCVCLLLTCGFAEA) are cleaved as a signal peptide. Residue asparagine 71 is glycosylated (N-linked (GlcNAc...) asparagine). At lysine 99 the chain carries N6-succinyllysine. N-linked (GlcNAc...) asparagine glycans are attached at residues asparagine 292 and asparagine 344. The chain crosses the membrane as a helical span at residues 488-504 (VIGFLLAVVLTVAFITF).

It belongs to the UDP-glycosyltransferase family. In terms of assembly, homodimer. Homooligomer. Interacts with UGT1A1, UGT1A3, UGT1A4, UGT1A6, UGT1A7, UGT1A8 and UGT1A10 to form heterodimers. Isoform 1 interacts with isoform 2/i2 suggesting that oligomerization is involved in negative regulation of transferase activity by isoform 2. Isoform 1 also interacts with respective i2 isoforms of UGT1A1, UGT1A3, UGT1A4, UGT1A6, UGT1A7, UGT1A8 and UGT1A10. As to expression, expressed in liver, kidney, colon, esophagus and small intestine.

It localises to the endoplasmic reticulum membrane. It carries out the reaction glucuronate acceptor + UDP-alpha-D-glucuronate = acceptor beta-D-glucuronoside + UDP + H(+). The enzyme catalyses 2-hydroxy-17beta-estradiol + UDP-alpha-D-glucuronate = 2-hydroxy-17beta-estradiol 3-O-(beta-D-glucuronate) + UDP + H(+). It catalyses the reaction 4-hydroxy-17beta-estradiol + UDP-alpha-D-glucuronate = 17beta-estradiol 4-O-(beta-D-glucuronate) + UDP + H(+). The catalysed reaction is 2-hydroxyestrone + UDP-alpha-D-glucuronate = 2-hydroxyestrone 3-O-(beta-D-glucuronate) + UDP + H(+). It carries out the reaction 4-hydroxyestrone + UDP-alpha-D-glucuronate = estrone 4-O-(beta-D-glucuronate) + UDP + H(+). The enzyme catalyses prunetin + UDP-alpha-D-glucuronate = prunetin-5-O-beta-D-glucuronide + UDP. It catalyses the reaction 8-iso-prostaglandin F2alpha + UDP-alpha-D-glucuronate = 8-iso-prostaglandin F2alpha-glucuronide + UDP + H(+). The catalysed reaction is 5-epi-5-F2t-IsoP + UDP-alpha-D-glucuronate = 5-epi-5-F2t-IsoP-glucuronide + UDP + H(+). It carries out the reaction (5Z,8Z,11Z,14Z)-eicosatetraenoate + UDP-alpha-D-glucuronate = O-[(5Z),(8Z),(11Z),(14Z)-eicosatetraenoyl]-beta-D-glucuronate + UDP. The enzyme catalyses 15-hydroxy-(5Z,8Z,11Z,13E)-eicosatetraenoate + UDP-alpha-D-glucuronate = 15-O-(beta-D-glucuronosyl)-(5Z,8Z,11Z,14Z)-eicosatetraenoate + UDP + H(+). It catalyses the reaction prostaglandin B1 + UDP-alpha-D-glucuronate = 15-O-(beta-D-glucuronosyl)-prostaglandin B1 + UDP + H(+). The catalysed reaction is (E)-ferulate + UDP-alpha-D-glucuronate = (E)-4-O-(beta-D-glucuronosyl)-ferulate + UDP + H(+). It carries out the reaction (E)-ferulate + UDP-alpha-D-glucuronate = (E)-ferulic acid beta-D-glucuronate ester + UDP. The enzyme catalyses candesartan + UDP-alpha-D-glucuronate = candesartan O-beta-D-glucuronoside + UDP. It catalyses the reaction SN-38 + UDP-alpha-D-glucuronate = SN-38 O-beta-D-glucuronide + UDP + H(+). The catalysed reaction is mycophenolate + UDP-alpha-D-glucuronate = mycophenolate 7-O-beta-D-glucuronide + UDP + H(+). Its function is as follows. UDP-glucuronosyltransferase (UGT) that catalyzes phase II biotransformation reactions in which lipophilic substrates are conjugated with glucuronic acid to increase the metabolite's water solubility, thereby facilitating excretion into either the urine or bile. Essential for the elimination and detoxification of drugs, xenobiotics and endogenous compounds. Catalyzes the glucuronidation of endogenous estrogen hormones such as estradiol and estrone. Involved in the glucuronidation of arachidonic acid (AA) and AA-derived eicosanoids including 15-HETE, PGB1 and F2-isoprostanes (8-iso-PGF2alpha and 5-epi-5-F2t-IsoP). Glucuronates the phytochemical ferulic acid efficently at both the phenolic or the carboxylic acid group. Also catalyzes the glucuronidation of the isoflavones genistein, daidzein, glycitein, formononetin, biochanin A and prunetin, which are phytoestrogens with anticancer and cardiovascular properties. Involved in the glucuronidation of the AGTR1 angiotensin receptor antagonist caderastan, a drug which can inhibit the effect of angiotensin II. Involved in the biotransformation of 7-ethyl-10-hydroxycamptothecin (SN-38), the pharmacologically active metabolite of the anticancer drug irinotecan. Also metabolizes mycophenolate, an immunosuppressive agent. Functionally, lacks UGT glucuronidation activity but acts as a negative regulator of isoform 1. This chain is UDP-glucuronosyltransferase 1A9, found in Homo sapiens (Human).